A 191-amino-acid chain; its full sequence is Phosphoheptose isomerase (191 aa).

Residues 34–191 (IATALKDGNK…LVEEMVCERS (158 aa)) form the SIS domain. Residue 49 to 51 (NGG) coordinates substrate. 2 residues coordinate Zn(2+): H58 and E62. Residues E62, 91 to 92 (ND), 117 to 119 (TTS), S122, and Q169 contribute to the substrate site. Zn(2+) contacts are provided by Q169 and H177.

This sequence belongs to the SIS family. GmhA subfamily. Zn(2+) serves as cofactor.

The protein localises to the cytoplasm. It carries out the reaction 2 D-sedoheptulose 7-phosphate = D-glycero-alpha-D-manno-heptose 7-phosphate + D-glycero-beta-D-manno-heptose 7-phosphate. Its pathway is carbohydrate biosynthesis; D-glycero-D-manno-heptose 7-phosphate biosynthesis; D-glycero-alpha-D-manno-heptose 7-phosphate and D-glycero-beta-D-manno-heptose 7-phosphate from sedoheptulose 7-phosphate: step 1/1. Catalyzes the isomerization of sedoheptulose 7-phosphate in D-glycero-D-manno-heptose 7-phosphate. The protein is Phosphoheptose isomerase of Aquifex aeolicus (strain VF5).